A 162-amino-acid polypeptide reads, in one-letter code: Protein A49 (162 aa).

This sequence belongs to the poxviridae A49 protein family.

In Variola virus (isolate Human/India/Ind3/1967) (VARV), this protein is Protein A49.